The primary structure comprises 636 residues: MHLSEITHPNQLHGLSVAQLEQIGHQIREKHLQTVAATGGHLGPGLGVVELTLALYQTLDLDRDKVVWDVGHQAYPHKLLTGRYHNFHTLRQKDGIAGYLKRTENRFDHFGAGHASTSISAALGMALARDAQGEDYRCVAVIGDGSLTGGMALEAINHAGHLPKTRLLVVLNDNDMSISPNVGALSRYLNKIRVSEPMQLLTDGLTQGMQQIPFVGGAITQGFEPVKEGMKRLSYSKIGAVFEELGFTYMGPVDGHNLEELIATFREAHKHTGPVLVHVATTKGKGYPYAEEDQVGYHAQNPFDLATGKAKPASKPKPPSHSKVFGQTLTTLAKSDRRIVGITAAMATGTGLDILQKALPKQYIDVGIAEQHAVVLAAGMACDGMRPVVAIYSTFLQRAFDQVIHDVCIQKLPVFFCLDRAGIVGADGPTHQGMYDIAYLRLIPNMVLMAPKDEAELQRMLVTGIEYDGPIAMRFPRGNGIGVPLPEEGWESLPIGKAEQLRQGDDLLMLAYGSMVYPALQTAELLNEHGISATVINARFAKPLDEELIVPLARQIGKVVTFEEGCLPGGFGSAIMESLQAHDLQVPVLPIGVPDLLVEHASPDESKQELGLTPRQMADRILEKFGSRQRIGAASA.

Thiamine diphosphate is bound by residues His-72 and 113-115; that span reads GHA. Asp-144 is a binding site for Mg(2+). Residues 145-146, Asn-174, Tyr-287, and Glu-370 each bind thiamine diphosphate; that span reads GS. Residue Asn-174 participates in Mg(2+) binding.

This sequence belongs to the transketolase family. DXPS subfamily. Homodimer. Mg(2+) is required as a cofactor. It depends on thiamine diphosphate as a cofactor.

The catalysed reaction is D-glyceraldehyde 3-phosphate + pyruvate + H(+) = 1-deoxy-D-xylulose 5-phosphate + CO2. The protein operates within metabolic intermediate biosynthesis; 1-deoxy-D-xylulose 5-phosphate biosynthesis; 1-deoxy-D-xylulose 5-phosphate from D-glyceraldehyde 3-phosphate and pyruvate: step 1/1. Its function is as follows. Catalyzes the acyloin condensation reaction between C atoms 2 and 3 of pyruvate and glyceraldehyde 3-phosphate to yield 1-deoxy-D-xylulose-5-phosphate (DXP). The sequence is that of 1-deoxy-D-xylulose-5-phosphate synthase from Synechococcus sp. (strain ATCC 27144 / PCC 6301 / SAUG 1402/1) (Anacystis nidulans).